A 491-amino-acid chain; its full sequence is Interferon regulatory factor 3 (491 aa).

The segment at residues 12 to 116 (KLRFGPWLLN…DPHKVYAVAS (105 aa)) is a DNA-binding region (IRF tryptophan pentad repeat).

This sequence belongs to the IRF family. Widely expressed with higher expression in lung, spleen and intestine.

Its subcellular location is the cytoplasm. It localises to the nucleus. Its function is as follows. Key transcriptional regulator of type I interferon (IFN)-dependent immune responses which plays a critical role in the innate immune response against DNA and RNA viruses. Regulates the transcription of type I IFN genes (IFN-alpha and IFN-beta) and IFN-stimulated genes (ISG) by binding to an interferon-stimulated response element (ISRE) in their promoters. May activate transcription by complex formation with other transcriptional factors, possibly members of the STAT family. Binds specifically to the IFN-stimulated response element (ISRE) but not to the IRF-1 binding site PRD-I. The chain is Interferon regulatory factor 3 (IRF3) from Gallus gallus (Chicken).